Consider the following 172-residue polypeptide: Methylated-DNA--protein-cysteine methyltransferase (172 aa).

Cysteine 142 functions as the Nucleophile; methyl group acceptor in the catalytic mechanism.

The protein belongs to the MGMT family.

Its subcellular location is the cytoplasm. It catalyses the reaction a 6-O-methyl-2'-deoxyguanosine in DNA + L-cysteinyl-[protein] = S-methyl-L-cysteinyl-[protein] + a 2'-deoxyguanosine in DNA. The enzyme catalyses a 4-O-methyl-thymidine in DNA + L-cysteinyl-[protein] = a thymidine in DNA + S-methyl-L-cysteinyl-[protein]. Functionally, involved in the cellular defense against the biological effects of O6-methylguanine (O6-MeG) and O4-methylthymine (O4-MeT) in DNA. Repairs the methylated nucleobase in DNA by stoichiometrically transferring the methyl group to a cysteine residue in the enzyme. This is a suicide reaction: the enzyme is irreversibly inactivated. The sequence is that of Methylated-DNA--protein-cysteine methyltransferase from Pyrococcus horikoshii (strain ATCC 700860 / DSM 12428 / JCM 9974 / NBRC 100139 / OT-3).